Here is a 127-residue protein sequence, read N- to C-terminus: Major sperm protein 19/31/40/45/50/51/53/59/61/65/81/113/142 (127 aa).

Residue Ala2 is modified to N-acetylalanine. The 118-residue stretch at 9-126 (DIQTQPGTKI…RRKNLPIEYN (118 aa)) folds into the MSP domain.

In terms of assembly, helical subfilaments are built from MSP dimers; filaments are formed from two subfilaments coiling round one another; and filaments themselves supercoil to produce bundles. In terms of tissue distribution, sperm.

It is found in the cell projection. It localises to the pseudopodium. The protein resides in the cytoplasm. Its subcellular location is the cytoskeleton. Its function is as follows. Central component in molecular interactions underlying sperm crawling. Forms an extensive filament system that extends from sperm villipoda, along the leading edge of the pseudopod. The protein is Major sperm protein 19/31/40/45/50/51/53/59/61/65/81/113/142 (msp-19) of Caenorhabditis elegans.